Consider the following 389-residue polypeptide: Succinate--CoA ligase [ADP-forming] subunit beta (389 aa).

The ATP-grasp domain occupies 9 to 236 (KELFAKHEVP…KDATDPLELK (228 aa)). ATP contacts are provided by residues Lys-45, 52-54 (GRG), Ser-94, and Glu-99. Mg(2+) contacts are provided by Asn-191 and Asp-205. Residues Asn-256 and 318–320 (GIT) each bind substrate.

The protein belongs to the succinate/malate CoA ligase beta subunit family. In terms of assembly, heterotetramer of two alpha and two beta subunits. Mg(2+) is required as a cofactor.

It catalyses the reaction succinate + ATP + CoA = succinyl-CoA + ADP + phosphate. The enzyme catalyses GTP + succinate + CoA = succinyl-CoA + GDP + phosphate. The protein operates within carbohydrate metabolism; tricarboxylic acid cycle; succinate from succinyl-CoA (ligase route): step 1/1. Its function is as follows. Succinyl-CoA synthetase functions in the citric acid cycle (TCA), coupling the hydrolysis of succinyl-CoA to the synthesis of either ATP or GTP and thus represents the only step of substrate-level phosphorylation in the TCA. The beta subunit provides nucleotide specificity of the enzyme and binds the substrate succinate, while the binding sites for coenzyme A and phosphate are found in the alpha subunit. The sequence is that of Succinate--CoA ligase [ADP-forming] subunit beta from Rhodococcus opacus (strain B4).